We begin with the raw amino-acid sequence, 278 residues long: Large ribosomal subunit protein uL2 (278 aa).

2 disordered regions span residues 33–57 (LIRPLHGTGGRNAHGRITTRHKGGG) and 224–278 (VVMN…GKKR). Positions 45–57 (AHGRITTRHKGGG) are enriched in basic residues. The segment covering 253–268 (PEGRTRKPNKASDKLI) has biased composition (basic and acidic residues). The span at 269–278 (VRRRRTGKKR) shows a compositional bias: basic residues.

The protein belongs to the universal ribosomal protein uL2 family. As to quaternary structure, part of the 50S ribosomal subunit. Forms a bridge to the 30S subunit in the 70S ribosome.

One of the primary rRNA binding proteins. Required for association of the 30S and 50S subunits to form the 70S ribosome, for tRNA binding and peptide bond formation. It has been suggested to have peptidyltransferase activity; this is somewhat controversial. Makes several contacts with the 16S rRNA in the 70S ribosome. The polypeptide is Large ribosomal subunit protein uL2 (Mycobacteroides abscessus (strain ATCC 19977 / DSM 44196 / CCUG 20993 / CIP 104536 / JCM 13569 / NCTC 13031 / TMC 1543 / L948) (Mycobacterium abscessus)).